The following is a 492-amino-acid chain: Probable malate:quinone oxidoreductase 1 (492 aa).

This sequence belongs to the MQO family. The cofactor is FAD.

It catalyses the reaction (S)-malate + a quinone = a quinol + oxaloacetate. It participates in carbohydrate metabolism; tricarboxylic acid cycle; oxaloacetate from (S)-malate (quinone route): step 1/1. This Staphylococcus aureus (strain MW2) protein is Probable malate:quinone oxidoreductase 1.